A 201-amino-acid polypeptide reads, in one-letter code: Glycerol-3-phosphate acyltransferase (201 aa).

A run of 5 helical transmembrane segments spans residues 5–25 (LLGA…FGVV), 55–75 (KMGV…ILVA), 88–108 (WVTA…WLGF), 118–138 (LGIF…GYAV), and 164–184 (TYGP…LIFL).

It belongs to the PlsY family. In terms of assembly, probably interacts with PlsX.

It is found in the cell inner membrane. It carries out the reaction an acyl phosphate + sn-glycerol 3-phosphate = a 1-acyl-sn-glycero-3-phosphate + phosphate. It participates in lipid metabolism; phospholipid metabolism. Functionally, catalyzes the transfer of an acyl group from acyl-phosphate (acyl-PO(4)) to glycerol-3-phosphate (G3P) to form lysophosphatidic acid (LPA). This enzyme utilizes acyl-phosphate as fatty acyl donor, but not acyl-CoA or acyl-ACP. This is Glycerol-3-phosphate acyltransferase from Anaeromyxobacter sp. (strain K).